The following is a 434-amino-acid chain: D-inositol 3-phosphate glycosyltransferase (434 aa).

Histidine 19 contacts 1D-myo-inositol 3-phosphate. Residues glutamine 25 to proline 26 and glycine 33 each bind UDP-N-acetyl-alpha-D-glucosamine. 1D-myo-inositol 3-phosphate is bound by residues aspartate 30 to asparagine 35, lysine 88, tyrosine 121, threonine 145, and arginine 165. 3 residues coordinate UDP-N-acetyl-alpha-D-glucosamine: arginine 239, lysine 244, and glutamine 297. 3 residues coordinate Mg(2+): tyrosine 306, arginine 307, and alanine 309. Positions 319 and 327 each coordinate UDP-N-acetyl-alpha-D-glucosamine. Threonine 333 is a binding site for Mg(2+). The tract at residues histidine 414 to threonine 434 is disordered.

Belongs to the glycosyltransferase group 1 family. MshA subfamily. As to quaternary structure, homodimer.

The catalysed reaction is 1D-myo-inositol 3-phosphate + UDP-N-acetyl-alpha-D-glucosamine = 1D-myo-inositol 2-acetamido-2-deoxy-alpha-D-glucopyranoside 3-phosphate + UDP + H(+). Its function is as follows. Catalyzes the transfer of a N-acetyl-glucosamine moiety to 1D-myo-inositol 3-phosphate to produce 1D-myo-inositol 2-acetamido-2-deoxy-glucopyranoside 3-phosphate in the mycothiol biosynthesis pathway. The sequence is that of D-inositol 3-phosphate glycosyltransferase (mshA) from Mycolicibacterium smegmatis (strain ATCC 700084 / mc(2)155) (Mycobacterium smegmatis).